The primary structure comprises 394 residues: Aromatic aminotransferase ISS1 (394 aa).

Gly2 is subject to N-acetylglycine. Gly38 contributes to the substrate binding site. Pyridoxal 5'-phosphate contacts are provided by residues Tyr64, 98 to 99 (AN), Tyr123, Asn176, Tyr207, and 230 to 232 (SFS). The substrate site is built by Tyr123 and Asn176. N6-(pyridoxal phosphate)lysine is present on Lys233. Arg241 is a pyridoxal 5'-phosphate binding site. The substrate site is built by Arg362 and Arg374.

It belongs to the class-I pyridoxal-phosphate-dependent aminotransferase family. In terms of assembly, homodimer. It depends on pyridoxal 5'-phosphate as a cofactor. Expressed in roots, cotyledons and flowers.

Its subcellular location is the cytoplasm. It carries out the reaction a 2-oxocarboxylate + L-methionine = 4-methylsulfanyl-2-oxobutanoate + an L-alpha-amino acid. The enzyme catalyses L-tryptophan + 2-oxoglutarate = indole-3-pyruvate + L-glutamate. It catalyses the reaction L-tyrosine + 2-oxoglutarate = 3-(4-hydroxyphenyl)pyruvate + L-glutamate. In terms of biological role, coordinates and prevents auxin (IAA) and ethylene biosynthesis, thus regulating auxin homeostasis in young seedlings. Shows aminotransferase activity with methionine; can use the ethylene biosynthetic intermediate L-methionine (L-Met) as an amino donor and the auxin biosynthetic intermediate, indole-3-pyruvic acid (3-IPA) as an amino acceptor to produce L-tryptophan (L-Trp) and 2-oxo-4-methylthiobutyric acid (KMBA). Can also use tryptophan (Trp), phenylalanine (Phe), and tyrosine (Tyr) as substrates. Regulates tryptophan (Trp) homeostasis and catabolism in mature plants. Also possibly involved in the metabolism of other aromatic amino acids and phenylpropanoid homeostasis. This is Aromatic aminotransferase ISS1 from Arabidopsis thaliana (Mouse-ear cress).